We begin with the raw amino-acid sequence, 119 residues long: Holo-[acyl-carrier-protein] synthase (119 aa).

Positions 8 and 58 each coordinate Mg(2+).

The protein belongs to the P-Pant transferase superfamily. AcpS family. The cofactor is Mg(2+).

Its subcellular location is the cytoplasm. The enzyme catalyses apo-[ACP] + CoA = holo-[ACP] + adenosine 3',5'-bisphosphate + H(+). Transfers the 4'-phosphopantetheine moiety from coenzyme A to a Ser of acyl-carrier-protein. This is Holo-[acyl-carrier-protein] synthase from Bacillus thuringiensis subsp. konkukian (strain 97-27).